The sequence spans 542 residues: Chaperonin GroEL 2 (542 aa).

Residues Thr30–Pro33, Lys51, Asp87–Thr91, Gly415, and Asp496 contribute to the ATP site.

Belongs to the chaperonin (HSP60) family. Forms a cylinder of 14 subunits composed of two heptameric rings stacked back-to-back. Interacts with the co-chaperonin GroES.

It is found in the cytoplasm. It catalyses the reaction ATP + H2O + a folded polypeptide = ADP + phosphate + an unfolded polypeptide.. Its function is as follows. Together with its co-chaperonin GroES, plays an essential role in assisting protein folding. The GroEL-GroES system forms a nano-cage that allows encapsulation of the non-native substrate proteins and provides a physical environment optimized to promote and accelerate protein folding. In Rhizobium leguminosarum, this protein is Chaperonin GroEL 2.